Here is a 738-residue protein sequence, read N- to C-terminus: Interleukin-12 receptor subunit beta-1 (738 aa).

A signal peptide spans 1 to 19 (MDMMGLAGTSKHITFLLLC). The Extracellular segment spans residues 20–565 (QLGASGPGDG…QRFSFEVQIS (546 aa)). 5 Fibronectin type-III domains span residues 47-152 (GPRN…TPPL), 152-258 (LGHI…PEVL), 259-359 (PQAK…LPAQ), 360-465 (ELTE…GNAS), and 469-565 (TPRH…VQIS). Residue Asn-50 is glycosylated (N-linked (GlcNAc...) asparagine). Cys-53 and Cys-63 are oxidised to a cystine. N-linked (GlcNAc...) asparagine glycans are attached at residues Asn-73, Asn-86, Asn-130, Asn-144, Asn-169, and Asn-188. Positions 244-248 (WSDWS) match the WSXWS motif motif. N-linked (GlcNAc...) asparagine glycosylation is found at Asn-330, Asn-368, Asn-374, Asn-401, Asn-463, and Asn-477. A helical transmembrane segment spans residues 566–591 (RLSIIFASLGSFASVLLVGSLGYIGL). The Cytoplasmic portion of the chain corresponds to 592–738 (NRAAWHLCPP…PGPPTLGQEA (147 aa)). A Box 1 motif motif is present at residues 598–606 (LCPPLPTPC).

This sequence belongs to the type I cytokine receptor family. Type 2 subfamily. As to quaternary structure, dimer or oligomer; disulfide-linked. Interacts with IL12RB2 to form the high affinity IL12 receptor. Heterodimer with IL23R; in presence of IL23. The heterodimer forms the IL23 receptor.

Its subcellular location is the membrane. Functionally, functions as an interleukin receptor which binds interleukin-12 with low affinity and is involved in IL12 transduction. Associated with IL12RB2 it forms a functional, high affinity receptor for IL12. Also associates with IL23R to form the interleukin-23 receptor which functions in IL23 signal transduction probably through activation of the Jak-Stat signaling cascade. This is Interleukin-12 receptor subunit beta-1 (Il12rb1) from Mus musculus (Mouse).